The following is a 1044-amino-acid chain: Multiple epidermal growth factor-like domains protein 11 (1044 aa).

Residues 1 to 19 (MVLSLTGLIAFSFLQATLA) form the signal peptide. Topologically, residues 20-848 (LNPEDPNVCS…SPALGAERHS (829 aa)) are extracellular. Residues 24–101 (DPNVCSHWES…YYESGDFCIP (78 aa)) enclose the EMI domain. Cystine bridges form between Cys-28–Cys-89, Cys-54–Cys-63, Cys-88–Cys-99, Cys-103–Cys-118, Cys-120–Cys-129, Cys-146–Cys-154, Cys-148–Cys-161, Cys-163–Cys-172, Cys-185–Cys-197, Cys-191–Cys-204, Cys-206–Cys-215, Cys-228–Cys-240, Cys-234–Cys-247, and Cys-249–Cys-258. EGF-like domains follow at residues 95–130 (SGDF…PDCS), 143–173 (SNRC…WRCE), 181–216 (HGKG…VYCE), 224–259 (HGAH…AVCA), 267–302 (FGQN…DRCQ), 310–345 (FGFQ…PRCQ), 399–434 (YGDG…EVCA), 442–477 (YGPN…LDCT), and 490–520 (NESC…DTCE). Asn-270 carries an N-linked (GlcNAc...) asparagine glycan. Intrachain disulfides connect Cys-271–Cys-283, Cys-277–Cys-290, Cys-292–Cys-301, Cys-314–Cys-326, Cys-320–Cys-333, Cys-335–Cys-344, Cys-403–Cys-415, Cys-409–Cys-422, Cys-424–Cys-433, Cys-446–Cys-458, Cys-452–Cys-465, Cys-467–Cys-476, Cys-493–Cys-501, Cys-495–Cys-508, and Cys-510–Cys-519. Residue Asn-531 is glycosylated (N-linked (GlcNAc...) asparagine). 5 EGF-like domains span residues 571 to 606 (WGPN…PLCQ), 659 to 694 (FGQD…KDCS), 707 to 737 (FHAC…LFCT), 750 to 780 (GRVC…QHCE), and 788 to 823 (FGYG…IRCD). Cystine bridges form between Cys-575–Cys-587, Cys-581–Cys-594, Cys-596–Cys-605, Cys-663–Cys-675, Cys-669–Cys-682, Cys-684–Cys-693, Cys-710–Cys-718, Cys-712–Cys-725, Cys-727–Cys-736, Cys-753–Cys-761, Cys-755–Cys-768, Cys-770–Cys-779, Cys-792–Cys-804, Cys-798–Cys-811, and Cys-813–Cys-822. The chain crosses the membrane as a helical span at residues 849 to 869 (VGAVTGIMLLLFLIVVLLGLF). Residues 870–1044 (AWHRRRQKEK…ANGPSQDKQS (175 aa)) are Cytoplasmic-facing. A disordered region spans residues 1023-1044 (GHYDLLPVRQSPANGPSQDKQS). The segment covering 1033–1044 (SPANGPSQDKQS) has biased composition (polar residues).

Belongs to the MEGF family. In terms of assembly, homomer. Does not interact with MEGF10.

The protein resides in the cell membrane. The protein localises to the basolateral cell membrane. In terms of biological role, may regulate the mosaic spacing of specific neuron subtypes in the retina through homotypic retinal neuron repulsion. Mosaics provide a mechanism to distribute each cell type evenly across the retina, ensuring that all parts of the visual field have access to a full set of processing elements. This chain is Multiple epidermal growth factor-like domains protein 11 (MEGF11), found in Homo sapiens (Human).